Here is a 148-residue protein sequence, read N- to C-terminus: Large ribosomal subunit protein uL13 (148 aa).

Residues 128-148 form a disordered region; the sequence is PEHPHQAQNPQPFEINAKVEK.

The protein belongs to the universal ribosomal protein uL13 family. Part of the 50S ribosomal subunit.

In terms of biological role, this protein is one of the early assembly proteins of the 50S ribosomal subunit, although it is not seen to bind rRNA by itself. It is important during the early stages of 50S assembly. The sequence is that of Large ribosomal subunit protein uL13 from Saccharopolyspora erythraea (strain ATCC 11635 / DSM 40517 / JCM 4748 / NBRC 13426 / NCIMB 8594 / NRRL 2338).